The chain runs to 593 residues: NADH-quinone oxidoreductase subunit C/D (593 aa).

The tract at residues 1–184 (MTADNALYIP…DPYSLTLAKQ (184 aa)) is NADH dehydrogenase I subunit C. The segment at 208 to 593 (DYMFLNLGPN…IDFVMADVDR (386 aa)) is NADH dehydrogenase I subunit D.

It in the N-terminal section; belongs to the complex I 30 kDa subunit family. This sequence in the C-terminal section; belongs to the complex I 49 kDa subunit family. In terms of assembly, NDH-1 is composed of 13 different subunits. Subunits NuoB, CD, E, F, and G constitute the peripheral sector of the complex.

It localises to the cell inner membrane. It carries out the reaction a quinone + NADH + 5 H(+)(in) = a quinol + NAD(+) + 4 H(+)(out). In terms of biological role, NDH-1 shuttles electrons from NADH, via FMN and iron-sulfur (Fe-S) centers, to quinones in the respiratory chain. The immediate electron acceptor for the enzyme in this species is believed to be ubiquinone. Couples the redox reaction to proton translocation (for every two electrons transferred, four hydrogen ions are translocated across the cytoplasmic membrane), and thus conserves the redox energy in a proton gradient. The chain is NADH-quinone oxidoreductase subunit C/D from Pseudomonas syringae pv. syringae (strain B728a).